A 341-amino-acid polypeptide reads, in one-letter code: L-threonine 3-dehydrogenase (341 aa).

C38 contacts Zn(2+). Residues T40 and H43 each act as charge relay system in the active site. Residues H63, E64, C93, C96, C99, and C107 each coordinate Zn(2+). Residues I175, D195, R200, L262–I264, and I286–Y287 each bind NAD(+).

This sequence belongs to the zinc-containing alcohol dehydrogenase family. As to quaternary structure, homotetramer. It depends on Zn(2+) as a cofactor.

It is found in the cytoplasm. It catalyses the reaction L-threonine + NAD(+) = (2S)-2-amino-3-oxobutanoate + NADH + H(+). Its pathway is amino-acid degradation; L-threonine degradation via oxydo-reductase pathway; glycine from L-threonine: step 1/2. Catalyzes the NAD(+)-dependent oxidation of L-threonine to 2-amino-3-ketobutyrate. In Salmonella arizonae (strain ATCC BAA-731 / CDC346-86 / RSK2980), this protein is L-threonine 3-dehydrogenase.